Here is a 184-residue protein sequence, read N- to C-terminus: Large ribosomal subunit protein uL6 (184 aa).

This sequence belongs to the universal ribosomal protein uL6 family. Part of the 50S ribosomal subunit.

Its function is as follows. This protein binds to the 23S rRNA, and is important in its secondary structure. It is located near the subunit interface in the base of the L7/L12 stalk, and near the tRNA binding site of the peptidyltransferase center. The protein is Large ribosomal subunit protein uL6 of Pseudothermotoga lettingae (strain ATCC BAA-301 / DSM 14385 / NBRC 107922 / TMO) (Thermotoga lettingae).